We begin with the raw amino-acid sequence, 200 residues long: Translation machinery-associated protein 22 (200 aa).

Residues 106–177 (VQIKRVERNK…DVLEWLVEVH (72 aa)) form the SUI1 domain.

Belongs to the DENR family. As to quaternary structure, interacts with the 40S ribosomal subunit.

The protein localises to the cytoplasm. The chain is Translation machinery-associated protein 22 (TMA22) from Coccidioides immitis (strain RS) (Valley fever fungus).